The primary structure comprises 1531 residues: Multidrug resistance-associated protein 1 (1531 aa).

Residues 1 to 33 (MALRGFCSADGSDPLWDWNVTWYTSNPDFTKCF) lie on the Extracellular side of the membrane. Asparagine 19 is a glycosylation site (N-linked (GlcNAc...) asparagine). Residues 34–54 (QNTVLVWVPCFYLWACFPFYF) traverse the membrane as a helical segment. Residues 55-74 (LYLSRHDRGYIQMTLLNKTK) lie on the Cytoplasmic side of the membrane. Residues 75–95 (TALGFLLWIVCWADLFYSFWE) traverse the membrane as a helical segment. Over 96 to 100 (RSRGI) the chain is Extracellular. A helical transmembrane segment spans residues 101–121 (FLAPVFLVSPTLLGITMLLAT). Over 122–133 (FLIQLERRKGVQ) the chain is Cytoplasmic. A helical transmembrane segment spans residues 134 to 154 (SSGIMLTFWLVALLCALAILR). At 155-172 (SKIMTALKEDVQVDLFRD) the chain is on the extracellular side. Residues 173 to 193 (MTFYVYFSLVLIQLVLSCFSD) traverse the membrane as a helical segment. The Cytoplasmic segment spans residues 194–316 (RSPLFSETIH…KEWNPSLFKV (123 aa)). Tyrosine 277 carries the phosphotyrosine modification. Serine 289 is modified (phosphoserine). Residues 317 to 337 (LYKTFGPYFLMSFFFKAIHDL) form a helical membrane-spanning segment. The ABC transmembrane type-1 1 domain maps to 325 to 608 (FLMSFFFKAI…LPMVISSIVQ (284 aa)). At 338 to 363 (MMFSGPEILKLLINFVNDTKAPDWQG) the chain is on the extracellular side. Residues 364–384 (YFYTALLFVAACLQTLVLHQY) form a helical membrane-spanning segment. The Cytoplasmic portion of the chain corresponds to 385 to 440 (FHICFVSGMRIKTAVIGAVYRKALVITNAARKSSTVGEIVNLMSVDAQRFMDLATY). Residues 441 to 461 (INMIWSAPLQVILALYLLWRN) traverse the membrane as a helical segment. Topologically, residues 462–464 (LGP) are extracellular. A helical membrane pass occupies residues 465-485 (PILAGVAVMVLMVPVNAVMAM). The Cytoplasmic segment spans residues 486-547 (KTKTYQVAHM…VLKKSAYLAA (62 aa)). An N6-succinyllysine modification is found at lysine 503. Residues 548 to 568 (VGTFTWVCTPFLVALCTFAVY) traverse the membrane as a helical segment. The Extracellular portion of the chain corresponds to 569–590 (VTIDKNNVLDAQKAFVSLALFN). Residues 591 to 611 (ILRFPLNILPMVISSIVQASV) traverse the membrane as a helical segment. The Cytoplasmic portion of the chain corresponds to 612–967 (SLKRLRIFLS…VKLSVYWDYM (356 aa)). In terms of domain architecture, ABC transporter 1 spans 644-868 (ITVRNATFTW…DGAFAEFLRT (225 aa)). Residue 678 to 685 (GQVGCGKS) coordinates ATP. The segment at 871 to 893 (SAEQEQDPEDNGVTGVSGPGKEA) is disordered. Serine 905, serine 915, and serine 930 each carry phosphoserine. A disordered region spans residues 917–938 (SSSYSGDVSRQHNSTAELQKDG). The span at 922–933 (GDVSRQHNSTAE) shows a compositional bias: polar residues. A helical transmembrane segment spans residues 968–988 (KAIGLFISFLSIFLFICNHVA). Residues 975 to 1256 (SFLSIFLFIC…LVRMSSEMET (282 aa)) form the ABC transmembrane type-1 2 domain. Residues 989–1025 (ALASNYWLSLWTDDPIVNGTQEHTKVRLSVYGALGIS) are Extracellular-facing. N-linked (GlcNAc...) asparagine glycosylation is present at asparagine 1006. A helical transmembrane segment spans residues 1026 to 1046 (QGIAVFGYSMAVSIGGILASR). The Cytoplasmic portion of the chain corresponds to 1047-1089 (CLHVDLLHSILRSPMSFFERTPSGNLVNRFSKELDTVDSMIPE). Residues 1090–1110 (VIKMFMGSLFNVIGACIVILL) traverse the membrane as a helical segment. Alanine 1111 is a topological domain (extracellular). Residues 1112–1132 (TPIAAIIIPPLGLIYFFVQRF) traverse the membrane as a helical segment. At 1133–1203 (YVASSRQLKR…VANRWLAVRL (71 aa)) the chain is on the cytoplasmic side. The chain crosses the membrane as a helical span at residues 1204–1224 (ECVGNCIVLFAALFAVISRHS). Topologically, residues 1225–1226 (LS) are extracellular. Residues 1227-1247 (AGLVGLSVSYSLQVTTYLNWL) traverse the membrane as a helical segment. Topologically, residues 1248–1531 (VRMSSEMETN…YNMARDAGLV (284 aa)) are cytoplasmic. Residues 1293 to 1527 (VEFRNYCLRY…RGLFYNMARD (235 aa)) enclose the ABC transporter 2 domain. 1327-1334 (GRTGAGKS) provides a ligand contact to ATP.

Belongs to the ABC transporter superfamily. ABCC family. Conjugate transporter (TC 3.A.1.208) subfamily.

The protein resides in the cell membrane. It is found in the basolateral cell membrane. The catalysed reaction is ATP + H2O + xenobioticSide 1 = ADP + phosphate + xenobioticSide 2.. It carries out the reaction an S-substituted glutathione(in) + ATP + H2O = an S-substituted glutathione(out) + ADP + phosphate + H(+). The enzyme catalyses sphing-4-enine 1-phosphate(in) + ATP + H2O = sphing-4-enine 1-phosphate(out) + ADP + phosphate + H(+). It catalyses the reaction leukotriene C4(in) + ATP + H2O = leukotriene C4(out) + ADP + phosphate + H(+). The catalysed reaction is 17beta-estradiol 17-O-(beta-D-glucuronate)(in) + ATP + H2O = 17beta-estradiol 17-O-(beta-D-glucuronate)(out) + ADP + phosphate + H(+). It carries out the reaction daunorubicin(in) + ATP + H2O = daunorubicin(out) + ADP + phosphate + H(+). The enzyme catalyses vincristine(in) + ATP + H2O = vincristine(out) + ADP + phosphate + H(+). It catalyses the reaction 2',3'-cGAMP(in) + ATP + H2O = 2',3'-cGAMP(out) + ADP + phosphate + H(+). The catalysed reaction is S-[(2E,6E,10E)-geranylgeranyl]-L-glutathione(in) + ATP + H2O = S-[(2E,6E,10E)-geranylgeranyl]-L-glutathione(out) + ADP + phosphate + H(+). It carries out the reaction prostaglandin A2-S-(R)-glutathione(in) + ATP + H2O = prostaglandin A2-S-(R)-glutathione(out) + ADP + phosphate + H(+). The enzyme catalyses prostaglandin A2-S-(S)-glutathione(in) + ATP + H2O = prostaglandin A2-S-(S)-glutathione(out) + ADP + phosphate + H(+). Its activity is regulated as follows. MK 571 inhibits sphingosine 1-phosphate and leukotriene C4 export. Functionally, mediates export of organic anions and drugs from the cytoplasm. Mediates ATP-dependent transport of glutathione and glutathione conjugates, leukotriene C4, estradiol-17-beta-o-glucuronide, methotrexate, antiviral drugs and other xenobiotics. Confers resistance to anticancer drugs by decreasing accumulation of drug in cells, and by mediating ATP- and GSH-dependent drug export. Hydrolyzes ATP with low efficiency. Catalyzes the export of sphingosine 1-phosphate from mast cells independently of their degranulation. Participates in inflammatory response by allowing export of leukotriene C4 from leukotriene C4-synthesizing cells. Mediates ATP-dependent, GSH-independent cyclic GMP-AMP (cGAMP) export. Thus, by limiting intracellular cGAMP concentrations negatively regulates the cGAS-STING pathway. Exports S-geranylgeranyl-glutathione (GGG) in lymphoid cells and stromal compartments of lymphoid organs. ABCC1 (via extracellular transport) with GGT5 (via GGG catabolism) establish GGG gradients within lymphoid tissues to position P2RY8-positive lymphocytes at germinal centers in lymphoid follicles and restrict their chemotactic transmigration from blood vessels to the bone marrow parenchyma. Mediates basolateral export of GSH-conjugated R- and S-prostaglandin A2 diastereomers in polarized epithelial cells. The protein is Multidrug resistance-associated protein 1 of Macaca fascicularis (Crab-eating macaque).